We begin with the raw amino-acid sequence, 457 residues long: MLNVVILAAGLGKRMQSDLPKVLHTLAGRPMLDHVIGSARQLQPARIIVVVGHGADRVKAAFEGLPGLQFALQQPQHGTGHAVQQAVPQLLEGDGEDDVTLVLYGDVPLVQPATLQNLLQARGRGVAVLTEVLADSTGYGRIVRDAQGQVCRIVEHKDASEAERAIKEVNTGILAAPTARLKDWLGRITNDNAQGEYYLTDVIGLAVGDGVPVGAAQPGASWETLGVNSRVQQAQLERAWQSELARRQLEAGVTLADPARFDVRGTLSCGRDVFIDVGCVFEGTVTLGDGVRVGPHCVLRDVAVQAGARIEAYSHLQQAKVGQEAVVGPYARLRPGADLGERSHVGNFVEIKNSVLQADSKANHLAYIGDADIGARVNVGAGTITCNYDGVNKHRTVIEDDAFIGSDTQLVAPVRVGKGATLGAGTTLTKDAPAGQLTISRARQSTIEGWKRPVKKS.

The segment at Met-1 to Arg-230 is pyrophosphorylase. UDP-N-acetyl-alpha-D-glucosamine is bound by residues Leu-7–Gly-10, Lys-21, Gln-73, Gly-78–Thr-79, Tyr-104–Asp-106, Gly-140, Glu-155, Asn-170, and Asn-228. Position 106 (Asp-106) interacts with Mg(2+). Asn-228 lines the Mg(2+) pocket. The interval Val-231–Ala-251 is linker. Residues Gly-252 to Ser-457 form an N-acetyltransferase region. UDP-N-acetyl-alpha-D-glucosamine contacts are provided by Arg-334 and Lys-352. The Proton acceptor role is filled by His-364. UDP-N-acetyl-alpha-D-glucosamine contacts are provided by Tyr-367 and Asn-378. Acetyl-CoA-binding positions include Ala-381, Asn-387–Tyr-388, Ser-406, Ala-424, and Arg-441.

The protein in the N-terminal section; belongs to the N-acetylglucosamine-1-phosphate uridyltransferase family. This sequence in the C-terminal section; belongs to the transferase hexapeptide repeat family. In terms of assembly, homotrimer. The cofactor is Mg(2+).

The protein resides in the cytoplasm. The catalysed reaction is alpha-D-glucosamine 1-phosphate + acetyl-CoA = N-acetyl-alpha-D-glucosamine 1-phosphate + CoA + H(+). The enzyme catalyses N-acetyl-alpha-D-glucosamine 1-phosphate + UTP + H(+) = UDP-N-acetyl-alpha-D-glucosamine + diphosphate. The protein operates within nucleotide-sugar biosynthesis; UDP-N-acetyl-alpha-D-glucosamine biosynthesis; N-acetyl-alpha-D-glucosamine 1-phosphate from alpha-D-glucosamine 6-phosphate (route II): step 2/2. Its pathway is nucleotide-sugar biosynthesis; UDP-N-acetyl-alpha-D-glucosamine biosynthesis; UDP-N-acetyl-alpha-D-glucosamine from N-acetyl-alpha-D-glucosamine 1-phosphate: step 1/1. It participates in bacterial outer membrane biogenesis; LPS lipid A biosynthesis. Functionally, catalyzes the last two sequential reactions in the de novo biosynthetic pathway for UDP-N-acetylglucosamine (UDP-GlcNAc). The C-terminal domain catalyzes the transfer of acetyl group from acetyl coenzyme A to glucosamine-1-phosphate (GlcN-1-P) to produce N-acetylglucosamine-1-phosphate (GlcNAc-1-P), which is converted into UDP-GlcNAc by the transfer of uridine 5-monophosphate (from uridine 5-triphosphate), a reaction catalyzed by the N-terminal domain. The polypeptide is Bifunctional protein GlmU (Bordetella bronchiseptica (strain ATCC BAA-588 / NCTC 13252 / RB50) (Alcaligenes bronchisepticus)).